Consider the following 345-residue polypeptide: Tryptophan--tRNA ligase (345 aa).

ATP-binding positions include 12–14 (RPT) and 20–21 (GH). Positions 13–21 (PTGKLHLGH) match the 'HIGH' region motif. Residue Asp-144 participates in L-tryptophan binding. ATP-binding positions include 156-158 (GKD), Leu-194, and 202-206 (KMSKS). The 'KMSKS' region signature appears at 202–206 (KMSKS).

This sequence belongs to the class-I aminoacyl-tRNA synthetase family. As to quaternary structure, homodimer.

It is found in the cytoplasm. The enzyme catalyses tRNA(Trp) + L-tryptophan + ATP = L-tryptophyl-tRNA(Trp) + AMP + diphosphate + H(+). In terms of biological role, catalyzes the attachment of tryptophan to tRNA(Trp). The protein is Tryptophan--tRNA ligase of Chlamydia caviae (strain ATCC VR-813 / DSM 19441 / 03DC25 / GPIC) (Chlamydophila caviae).